Reading from the N-terminus, the 358-residue chain is UDP-N-acetylglucosamine--N-acetylmuramyl-(pentapeptide) pyrophosphoryl-undecaprenol N-acetylglucosamine transferase (358 aa).

UDP-N-acetyl-alpha-D-glucosamine contacts are provided by residues threonine 11–glycine 13, asparagine 120, arginine 161, serine 188, and glutamine 282.

This sequence belongs to the glycosyltransferase 28 family. MurG subfamily.

Its subcellular location is the cell inner membrane. The enzyme catalyses di-trans,octa-cis-undecaprenyl diphospho-N-acetyl-alpha-D-muramoyl-L-alanyl-D-glutamyl-meso-2,6-diaminopimeloyl-D-alanyl-D-alanine + UDP-N-acetyl-alpha-D-glucosamine = di-trans,octa-cis-undecaprenyl diphospho-[N-acetyl-alpha-D-glucosaminyl-(1-&gt;4)]-N-acetyl-alpha-D-muramoyl-L-alanyl-D-glutamyl-meso-2,6-diaminopimeloyl-D-alanyl-D-alanine + UDP + H(+). It participates in cell wall biogenesis; peptidoglycan biosynthesis. Its function is as follows. Cell wall formation. Catalyzes the transfer of a GlcNAc subunit on undecaprenyl-pyrophosphoryl-MurNAc-pentapeptide (lipid intermediate I) to form undecaprenyl-pyrophosphoryl-MurNAc-(pentapeptide)GlcNAc (lipid intermediate II). The chain is UDP-N-acetylglucosamine--N-acetylmuramyl-(pentapeptide) pyrophosphoryl-undecaprenol N-acetylglucosamine transferase from Parasynechococcus marenigrum (strain WH8102).